Consider the following 323-residue polypeptide: Leukocyte surface antigen CD47 (323 aa).

The signal sequence occupies residues 1–18 (MWPLVAALLLGSACCGSA). Q19 carries the pyrrolidone carboxylic acid modification. The Ig-like V-type domain occupies 19–127 (QLLFNKTKSV…ELTREGETII (109 aa)). Residues 19–141 (QLLFNKTKSV…RVVSWFSPNE (123 aa)) lie on the Extracellular side of the membrane. 4 N-linked (GlcNAc...) asparagine glycosylation sites follow: N23, N34, N50, and N73. Cystine bridges form between C33-C263 and C41-C114. S89 carries the phosphoserine modification. An N-linked (GlcNAc...) asparagine glycan is attached at N111. Residues 142–162 (NILIVIFPIFAILLFWGQFGI) form a helical membrane-spanning segment. The Cytoplasmic portion of the chain corresponds to 163 to 176 (KTLKYRSGGMDEKT). The helical transmembrane segment at 177-197 (IALLVAGLVITVIVIVGAILF) threads the bilayer. Over 198–207 (VPGEYSLKNA) the chain is Extracellular. An N-linked (GlcNAc...) asparagine glycan is attached at N206. A helical transmembrane segment spans residues 208-228 (TGLGLIVTSTGILILLHYYVF). At 229 to 235 (STAIGLT) the chain is on the cytoplasmic side. A helical transmembrane segment spans residues 236-256 (SFVIAILVIQVIAYILAVVGL). The Extracellular portion of the chain corresponds to 257-268 (SLCIAACIPMHG). A helical membrane pass occupies residues 269–289 (PLLISGLSILALAQLLGLVYM). The Cytoplasmic portion of the chain corresponds to 290 to 323 (KFVASNQKTIQPPRKAVEEPLNAFKESKGMMNDE).

In terms of assembly, monomer. Interacts with THBS1 (via the C-terminal domain). Interacts with SIRPA. Interacts with FAS/CD95; interaction may be enhanced by functional activation. Interacts with SIRPG, UBQLN1 and UBQLN2. May interact with fibrinogen. Interacts with Aedes aegypti neutrophil-stimulating factor 1; the interaction results in inhibition of phagocytosis activity of macrophages. Very broadly distributed on normal adult tissues, as well as ovarian tumors, being especially abundant in some epithelia and the brain. Macrophages.

Its subcellular location is the cell membrane. Adhesive protein that mediates cell-to-cell interactions. Acts as a receptor for thrombospondin THBS1 and as modulator of integrin signaling through the activation of heterotrimeric G proteins. Involved in signal transduction, cardiovascular homeostasis, inflammation, apoptosis, angiogenesis, cellular self-renewal, and immunoregulation. Plays a role in modulating pulmonary endothelin EDN1 signaling. Modulates nitrous oxide (NO) signaling, in response to THBS1, hence playing a role as a pressor agent, supporting blood pressure. Plays an important role in memory formation and synaptic plasticity in the hippocampus. Receptor for SIRPA, binding to which prevents maturation of immature dendritic cells and inhibits cytokine production by mature dendritic cells. Interaction with SIRPG mediates cell-cell adhesion, enhances superantigen-dependent T-cell-mediated proliferation and costimulates T-cell activation. Positively modulates FAS-dependent apoptosis in T-cells, perhaps by enhancing FAS clustering. Plays a role in suppressing angiogenesis and may be involved in metabolic dysregulation during normal aging. In response to THBS1, negatively modulates wound healing. Inhibits stem cell self-renewal, in response to THBS1, probably by regulation of the stem cell transcription factors POU5F1/OCT4, SOX2, MYC/c-Myc and KLF4. May play a role in membrane transport and/or integrin dependent signal transduction. May prevent premature elimination of red blood cells. In Homo sapiens (Human), this protein is Leukocyte surface antigen CD47 (CD47).